The chain runs to 267 residues: Enolase-phosphatase E1 (267 aa).

Asp-11 and Glu-13 together coordinate Mg(2+). Residues Ser-155–Ser-156 and Lys-189 each bind substrate. Asp-215 is a Mg(2+) binding site.

It belongs to the HAD-like hydrolase superfamily. MasA/MtnC family. In terms of assembly, monomer. The cofactor is Mg(2+).

The protein localises to the cytoplasm. Its subcellular location is the nucleus. It carries out the reaction 5-methylsulfanyl-2,3-dioxopentyl phosphate + H2O = 1,2-dihydroxy-5-(methylsulfanyl)pent-1-en-3-one + phosphate. Its pathway is amino-acid biosynthesis; L-methionine biosynthesis via salvage pathway; L-methionine from S-methyl-5-thio-alpha-D-ribose 1-phosphate: step 3/6. It functions in the pathway amino-acid biosynthesis; L-methionine biosynthesis via salvage pathway; L-methionine from S-methyl-5-thio-alpha-D-ribose 1-phosphate: step 4/6. Functionally, bifunctional enzyme that catalyzes the enolization of 2,3-diketo-5-methylthiopentyl-1-phosphate (DK-MTP-1-P) into the intermediate 2-hydroxy-3-keto-5-methylthiopentenyl-1-phosphate (HK-MTPenyl-1-P), which is then dephosphorylated to form the acireductone 1,2-dihydroxy-3-keto-5-methylthiopentene (DHK-MTPene). The polypeptide is Enolase-phosphatase E1 (enoph1) (Dictyostelium discoideum (Social amoeba)).